Consider the following 225-residue polypeptide: C-reactive protein (225 aa).

An N-terminal signal peptide occupies residues 1-20 (MEKLLWCFLTLVSFSNMSDQ). A Pentraxin (PTX) domain is found at 24-225 (HKKAFVFPKE…EVHVKPQLWP (202 aa)). C55 and C116 are disulfide-bonded. Positions 80, 158, 159, and 169 each coordinate Ca(2+).

Belongs to the pentraxin family. As to quaternary structure, homopentamer. Pentraxin (or pentaxin) have a discoid arrangement of 5 non-covalently bound subunits. Interacts with FCN1; may regulate monocyte activation by FCN1. It depends on Ca(2+) as a cofactor. In terms of tissue distribution, found in plasma.

The protein localises to the secreted. Displays several functions associated with host defense: it promotes agglutination, bacterial capsular swelling, phagocytosis and complement fixation through its calcium-dependent binding to phosphorylcholine. Can interact with DNA and histones and may scavenge nuclear material released from damaged circulating cells. The chain is C-reactive protein (CRP) from Oryctolagus cuniculus (Rabbit).